Here is a 155-residue protein sequence, read N- to C-terminus: Molybdopterin synthase catalytic subunit 1 (155 aa).

Residues 101–102, Lys-117, and 124–126 contribute to the substrate site; these read HR and KKE.

The protein belongs to the MoaE family. MOCS2B subfamily. In terms of assembly, heterotetramer; composed of 2 small (MOCS2A) and 2 large (MOCS2B) subunits.

The protein localises to the cytoplasm. It catalyses the reaction 2 [molybdopterin-synthase sulfur-carrier protein]-C-terminal-Gly-aminoethanethioate + cyclic pyranopterin phosphate + H2O = molybdopterin + 2 [molybdopterin-synthase sulfur-carrier protein]-C-terminal Gly-Gly + 2 H(+). It functions in the pathway cofactor biosynthesis; molybdopterin biosynthesis. Functionally, catalytic subunit of the molybdopterin synthase complex, a complex that catalyzes the conversion of precursor Z into molybdopterin. Acts by mediating the incorporation of 2 sulfur atoms from thiocarboxylated MOCS2A into precursor Z to generate a dithiolene group. This Aedes aegypti (Yellowfever mosquito) protein is Molybdopterin synthase catalytic subunit 1.